The following is a 344-amino-acid chain: uncharacterized protein (344 aa).

The N-terminal stretch at 1-20 (MEIRIMLFILMMMVMPVSYA) is a signal peptide.

Belongs to the fimbrial protein family.

Its function is as follows. Part of the yehABCD fimbrial operon. Could contribute to adhesion to various surfaces in specific environmental niches. This is an uncharacterized protein from Escherichia coli (strain K12).